The following is a 321-amino-acid chain: Tyrosine recombinase XerC (321 aa).

Residues 16–107 enclose the Core-binding (CB) domain; that stretch reads SDIGQQIVRW…GLRSFARFLE (92 aa). The 188-residue stretch at 128 to 315 folds into the Tyr recombinase domain; it reads SVPKPIHMSA…DSERLLDVYR (188 aa). Active-site residues include arginine 173, lysine 199, histidine 267, arginine 270, and histidine 293. The active-site O-(3'-phospho-DNA)-tyrosine intermediate is the tyrosine 302.

The protein belongs to the 'phage' integrase family. XerC subfamily. As to quaternary structure, forms a cyclic heterotetrameric complex composed of two molecules of XerC and two molecules of XerD.

The protein localises to the cytoplasm. In terms of biological role, site-specific tyrosine recombinase, which acts by catalyzing the cutting and rejoining of the recombining DNA molecules. The XerC-XerD complex is essential to convert dimers of the bacterial chromosome into monomers to permit their segregation at cell division. It also contributes to the segregational stability of plasmids. This Nitrobacter winogradskyi (strain ATCC 25391 / DSM 10237 / CIP 104748 / NCIMB 11846 / Nb-255) protein is Tyrosine recombinase XerC.